Consider the following 141-residue polypeptide: Small ribosomal subunit protein uS11 (141 aa).

This sequence belongs to the universal ribosomal protein uS11 family. Part of the 30S ribosomal subunit.

Its function is as follows. Located on the platform of the 30S subunit. This Pyrobaculum calidifontis (strain DSM 21063 / JCM 11548 / VA1) protein is Small ribosomal subunit protein uS11.